We begin with the raw amino-acid sequence, 713 residues long: Polyribonucleotide nucleotidyltransferase (713 aa).

The Mg(2+) site is built by Asp-485 and Asp-491. Residues 552 to 611 form the KH domain; it reads PRIHTIKINPEKIKDVIGKGGSVIRALTEETGTNIELDDDGTVRISAVANEAAMEAIRRI. The 69-residue stretch at 621–689 folds into the S1 motif domain; that stretch reads NRIYEGKVVR…RQGRVRLSIK (69 aa).

This sequence belongs to the polyribonucleotide nucleotidyltransferase family. In terms of assembly, component of the RNA degradosome, which is a multiprotein complex involved in RNA processing and mRNA degradation. Requires Mg(2+) as cofactor.

The protein resides in the cytoplasm. It carries out the reaction RNA(n+1) + phosphate = RNA(n) + a ribonucleoside 5'-diphosphate. Involved in mRNA degradation. Catalyzes the phosphorolysis of single-stranded polyribonucleotides processively in the 3'- to 5'-direction. The chain is Polyribonucleotide nucleotidyltransferase from Aeromonas salmonicida (strain A449).